Reading from the N-terminus, the 61-residue chain is uncharacterized protein (61 aa).

This is an uncharacterized protein from Acidianus bottle-shaped virus (isolate Italy/Pozzuoli) (ABV).